The following is a 40-amino-acid chain: Dolichyl-diphosphooligosaccharide--protein glycosyltransferase subunit 4 (40 aa).

The Lumenal segment spans residues 1–7 (MITDMQL). A helical membrane pass occupies residues 8-28 (AIFSNVLGVFLFLLVVAYHYI). At 29–40 (NANTGKPSAKAK) the chain is on the cytoplasmic side.

It belongs to the OST4 family. In terms of assembly, component of the oligosaccharyltransferase (OST) complex.

The protein localises to the endoplasmic reticulum membrane. Its function is as follows. Subunit of the oligosaccharyl transferase (OST) complex that catalyzes the initial transfer of a defined glycan (Glc(3)Man(9)GlcNAc(2) in eukaryotes) from the lipid carrier dolichol-pyrophosphate to an asparagine residue within an Asn-X-Ser/Thr consensus motif in nascent polypeptide chains, the first step in protein N-glycosylation. N-glycosylation occurs cotranslationally and the complex associates with the Sec61 complex at the channel-forming translocon complex that mediates protein translocation across the endoplasmic reticulum (ER). All subunits are required for a maximal enzyme activity. The polypeptide is Dolichyl-diphosphooligosaccharide--protein glycosyltransferase subunit 4 (Drosophila sechellia (Fruit fly)).